The sequence spans 1171 residues: MPRKGNGQLPLPDGWEEARDYDGKVFYIDHNSRQTSWIDPRDRLTKPLSFADCVGNELPWGWESSYDPQIGVYFINHINQTTQIEDPRKLWRNEQERMLKDYLMVAQDALSTQKELYHIKEQRLALALDEYVRLNDAYKEKSSSRTSLFSGSSSSTKYDPDILKAEISTTKVRVKKLKRELSQMKQELLYKEQGFETLQRIDQKMSGGQSGYELREAKDILSELKSIRKAISTGEKEKQDLMQSLVKLKERFHLEEARGRSEPDLRSNLANSHLSLSRQTLDAGSQTDISGDIGVRSRSNLAEKVRLSLQYEEAKRSMANLKIELAKLDSEAWPGALDVEKEKLMLINEKEELLKELQFVTTRRRTQGEIERLEGERRRLEEELLSVKSSPSKALAEQLKIQEKKKELVKKLEEVTKSATYLHSQLKSLSASTLSVSSGSSIGSLASSRGSLNTSSRGSLNSLSSTDLYYNQNEPAADLDYQYKLDFLLQEKSGYIPCGPITTIHENEVVHCHERIDYTNSPTAQQDTQDAKPPKSVTSLSSLSSLSSLSPPGSPPVLEGVFSLCTQDSLRTGFEISELPESFADMNLHENLQLMESVAGESQALAERKSTGEGLRHQSSASQEGRTDIEFPRKNPDRVQEEKAMCVSAAVSDESVAGDSGVYEPSVKPPGEDPVFNDDYSILGAAQAQLILRYDSGNSSFVIIIVKARNNLSYVQFGSRIYFRVAVLPSSNDTSCLFRTKVYPATESVLFNELFRVSISQTTLQQKTLRVDMCSVGKTHREDCLAGTQISLADFSFSNDVHTQWYTLLPSRTIPLHKEQLEKSVLSASNTQTAALDLDAVSALLERTSAELEAVEQELAQEDDDQEQLCPGDDWPEMAPEESFSTLEEHEADLLLSGEYYAVPLQLSSETTEKSEELYGETSNWDSVVSPLPQAELPTLVDKETNTEEALQENLSVRPKERANLGSRQRPFVRNSMIVRSQTFSPGEKNQYICRLNRSDSDSSTLAKKSPFIRNANERRSLRVKRPICQPMTRRTVHECRERTSLDLELDLQASLTRQSRLNDELQSLRDLKQRLEEMKARGETELPTCVLEDERFQRLLKQAEKQAEQSKEEQKQGLNAEKLMRKASKDVCRLREQSQKVPLQVQSFREKITYFTRAKISIPSLSADDV.

2 WW domains span residues leucine 9 to aspartate 42 and asparagine 56 to lysine 89. Coiled-coil stretches lie at residues lysine 120–glutamine 193, glutamate 223–alanine 257, and leucine 301–threonine 420. 2 disordered regions span residues serine 521–proline 552 and glutamine 603–aspartate 637. A compositionally biased stretch (low complexity) spans proline 534–proline 551. Basic and acidic residues-rich tracts occupy residues alanine 606 to arginine 616 and glycine 625 to aspartate 637. The region spanning glycine 684–tyrosine 806 is the C2 domain. 2 coiled-coil regions span residues leucine 836–cysteine 870 and aspartate 1047–lysine 1123.

Belongs to the WWC family.

The protein localises to the cytoplasm. It is found in the cytosol. Negative regulator of the Hippo signaling pathway, also known as the Salvador-Warts-Hippo (SWH) pathway. This Xenopus tropicalis (Western clawed frog) protein is Protein WWC2 (wwc2).